Here is a 343-residue protein sequence, read N- to C-terminus: Glyceraldehyde-3-phosphate dehydrogenase (343 aa).

Residues 13–14 (TI) and G111 contribute to the NAD(+) site. 140–142 (SCN) provides a ligand contact to D-glyceraldehyde 3-phosphate. Residue C141 is the Nucleophile of the active site. Residue R169 coordinates NAD(+). Residue 195 to 196 (HA) participates in D-glyceraldehyde 3-phosphate binding. Residue Q302 coordinates NAD(+).

This sequence belongs to the glyceraldehyde-3-phosphate dehydrogenase family. As to quaternary structure, homotetramer.

The protein resides in the cytoplasm. The catalysed reaction is D-glyceraldehyde 3-phosphate + phosphate + NADP(+) = (2R)-3-phospho-glyceroyl phosphate + NADPH + H(+). It carries out the reaction D-glyceraldehyde 3-phosphate + phosphate + NAD(+) = (2R)-3-phospho-glyceroyl phosphate + NADH + H(+). The protein operates within carbohydrate degradation; glycolysis; pyruvate from D-glyceraldehyde 3-phosphate: step 1/5. This is Glyceraldehyde-3-phosphate dehydrogenase from Hyperthermus butylicus (strain DSM 5456 / JCM 9403 / PLM1-5).